The chain runs to 246 residues: Small ribosomal subunit protein uS2 (246 aa).

This sequence belongs to the universal ribosomal protein uS2 family. In terms of assembly, component of the small ribosomal subunit. Mature ribosomes consist of a small (40S) and a large (60S) subunit. The 40S subunit contains about 33 different proteins and 1 molecule of RNA (18S). The 60S subunit contains about 49 different proteins and 3 molecules of RNA (25S, 5.8S and 5S). Interacts with ribosomal protein S21.

Its subcellular location is the cytoplasm. Functionally, required for the assembly and/or stability of the 40S ribosomal subunit. Required for the processing of the 20S rRNA-precursor to mature 18S rRNA in a late step of the maturation of 40S ribosomal subunits. The sequence is that of Small ribosomal subunit protein uS2 from Leishmania infantum.